Consider the following 1483-residue polypeptide: Heme-responsive zinc finger transcription factor HAP1 (1483 aa).

Positions 1-50 are enriched in polar residues; sequence MSNTPYNSSVPSIASMTQSSVSRSPNMHTATTPGANTSSNSPPLHMSSDS. The segment at 1 to 56 is disordered; it reads MSNTPYNSSVPSIASMTQSSVSRSPNMHTATTPGANTSSNSPPLHMSSDSSKIKRK. Zn(2+) contacts are provided by C64, C67, C74, C81, C84, and C93. A DNA-binding region (zn(2)-C6 fungal-type) is located at residues 64–93; the sequence is CTICRKRKVKCDKLRPHCQQCTKTGVAHLC. Positions 105-134 form a coiled coil; the sequence is EKELLKDNELKKLRERVKSLEKTLSKVHSS. A compositionally biased stretch (polar residues) spans 162–176; that stretch reads VNANTGSASSASHMH. The segment at 162–208 is disordered; it reads VNANTGSASSASHMHQQQQQQQQQEQQQDFSRSANANANSSSLSISN. The span at 177–208 shows a compositional bias: low complexity; sequence QQQQQQQQQEQQQDFSRSANANANSSSLSISN. The segment at 244-444 is heme-responsive; required for HMC formation; it reads KGDPYLKLLW…NTIPHHQPQS (201 aa). HRM repeat units lie at residues 280 to 285, 299 to 304, 323 to 328, 347 to 352, 389 to 394, and 415 to 420; these read KCPINH, KCPVDH, RCPVDH, and RCPIDH. Composition is skewed to polar residues over residues 432-447 and 706-734; these read STHN…SGSH and QLNA…NPTL. Disordered stretches follow at residues 432–458 and 706–767; these read STHN…NRKH and QLNA…KENQ. Residues 735-759 are compositionally biased toward low complexity; the sequence is NNNMSAATTNSSSRSGSADSRSGSN. One copy of the HRM 7 repeat lies at 1192-1197; that stretch reads KCPVYQ. Disordered regions lie at residues 1266-1289 and 1386-1411; these read DGYI…SNGL and NTDT…ASNS. Polar residues predominate over residues 1388–1411; the sequence is DTSANGSALSTLTSPQGSDLASNS.

In terms of assembly, binds DNA as a homodimer. Interacts with SRO9 and YDJ1. In the absence of heme, binds to at least four cellular proteins, including YDJ1 and SRO9, forming a high-molecular-weight complex (HMC) which results in repression of its activity and dictates its DNA-binding specificity.

It localises to the nucleus. Functionally, regulation of oxygen dependent gene expression. It modulates the expression of Iso-1 (CYP1) and Iso-2 (CYP3) cytochrome c. In response to heme, promotes transcription of genes encoding functions required for respiration, controlling oxidative damage and repression of anaerobic genes. Binds to the sequence 5'-CGGNNNTNNCGG-3'. This Saccharomyces cerevisiae (strain JAY291) (Baker's yeast) protein is Heme-responsive zinc finger transcription factor HAP1 (HAP1).